A 101-amino-acid chain; its full sequence is Small ribosomal subunit protein uS14 (101 aa).

Belongs to the universal ribosomal protein uS14 family. As to quaternary structure, part of the 30S ribosomal subunit. Contacts proteins S3 and S10.

Functionally, binds 16S rRNA, required for the assembly of 30S particles and may also be responsible for determining the conformation of the 16S rRNA at the A site. This chain is Small ribosomal subunit protein uS14, found in Zymomonas mobilis subsp. mobilis (strain ATCC 31821 / ZM4 / CP4).